Consider the following 105-residue polypeptide: uncharacterized protein (105 aa).

A helical membrane pass occupies residues 64–84; that stretch reads ILLISIFFLLLFALPQHTMGI.

It localises to the membrane. This is an uncharacterized protein from Saccharomyces cerevisiae (strain ATCC 204508 / S288c) (Baker's yeast).